Reading from the N-terminus, the 1416-residue chain is DNA-directed RNA polymerase subunit beta' (1416 aa).

Zn(2+)-binding residues include Cys-71, Cys-73, Cys-86, and Cys-89. Positions 461, 463, and 465 each coordinate Mg(2+). Residues Cys-815, Cys-889, Cys-896, and Cys-899 each contribute to the Zn(2+) site.

Belongs to the RNA polymerase beta' chain family. The RNAP catalytic core consists of 2 alpha, 1 beta, 1 beta' and 1 omega subunit. When a sigma factor is associated with the core the holoenzyme is formed, which can initiate transcription. Requires Mg(2+) as cofactor. Zn(2+) serves as cofactor.

The enzyme catalyses RNA(n) + a ribonucleoside 5'-triphosphate = RNA(n+1) + diphosphate. DNA-dependent RNA polymerase catalyzes the transcription of DNA into RNA using the four ribonucleoside triphosphates as substrates. This is DNA-directed RNA polymerase subunit beta' from Haemophilus influenzae (strain PittEE).